Consider the following 91-residue polypeptide: M-myrmeciitoxin-Mb3a (91 aa).

Residues Met1 to Ser21 form the signal peptide. Positions Pro22–Ala54 are excised as a propeptide.

In terms of assembly, homodimer; disulfide-linked. In terms of tissue distribution, expressed by the venom gland and reservoir.

The protein localises to the secreted. Its function is as follows. Causes a significant and dose-dependent histamine release, probably by influencing the signal transduction of mast cells through a non-IgE-mediated pathway. This peptide does not have cytotoxic activities. The protein is M-myrmeciitoxin-Mb3a of Myrmecia banksi (Jack jumper ant).